The following is a 324-amino-acid chain: Ribosomal RNA small subunit methyltransferase H (324 aa).

S-adenosyl-L-methionine contacts are provided by residues 41–43, D60, Y87, D111, and Q118; that span reads GGH.

The protein belongs to the methyltransferase superfamily. RsmH family.

It localises to the cytoplasm. It catalyses the reaction cytidine(1402) in 16S rRNA + S-adenosyl-L-methionine = N(4)-methylcytidine(1402) in 16S rRNA + S-adenosyl-L-homocysteine + H(+). Specifically methylates the N4 position of cytidine in position 1402 (C1402) of 16S rRNA. The chain is Ribosomal RNA small subunit methyltransferase H from Nocardia farcinica (strain IFM 10152).